The chain runs to 430 residues: Delta(14)-sterol reductase (430 aa).

The next 6 membrane-spanning stretches (helical) occupy residues 12 to 32, 67 to 87, 109 to 129, 230 to 250, 267 to 287, and 290 to 310; these read IGTG…HFLI, LAVA…PAEI, FLVF…TWWF, FVSD…VDAL, LGVM…CLQA, and LASF…AVQF. Residues lysine 323, arginine 327, leucine 350, tryptophan 355, and 362 to 363 contribute to the NADP(+) site; that span reads NY. 2 helical membrane-spanning segments follow: residues 349 to 369 and 376 to 396; these read LLIS…DWIM and TTGF…ILLL. NADP(+)-binding positions include aspartate 402, 406 to 410, and tyrosine 417; that span reads CREKY.

This sequence belongs to the ERG4/ERG24 family.

Its subcellular location is the membrane. It catalyses the reaction 4,4-dimethyl-5alpha-cholesta-8,24-dien-3beta-ol + NADP(+) = 4,4-dimethyl-5alpha-cholesta-8,14,24-trien-3beta-ol + NADPH + H(+). Its pathway is steroid biosynthesis; zymosterol biosynthesis; zymosterol from lanosterol: step 2/6. In terms of biological role, reduces the C14=C15 double bond of 4,4-dimethyl-cholesta-8,14,24-trienol to produce 4,4-dimethyl-cholesta-8,24-dienol. The sequence is that of Delta(14)-sterol reductase (ERG3) from Ascobolus immersus.